The primary structure comprises 508 residues: Photosystem II CP47 reaction center protein (508 aa).

Helical transmembrane passes span 21 to 36 (SVHI…WAGS), 101 to 115 (IVFS…IWHW), 140 to 156 (GIHL…FGAF), 203 to 218 (IAAG…FHLS), 237 to 252 (VLSS…AFVV), and 457 to 472 (TFAL…HGAR).

Belongs to the PsbB/PsbC family. PsbB subfamily. PSII is composed of 1 copy each of membrane proteins PsbA, PsbB, PsbC, PsbD, PsbE, PsbF, PsbH, PsbI, PsbJ, PsbK, PsbL, PsbM, PsbT, PsbX, PsbY, PsbZ, Psb30/Ycf12, at least 3 peripheral proteins of the oxygen-evolving complex and a large number of cofactors. It forms dimeric complexes. Binds multiple chlorophylls. PSII binds additional chlorophylls, carotenoids and specific lipids. is required as a cofactor.

It is found in the plastid. It localises to the chloroplast thylakoid membrane. Functionally, one of the components of the core complex of photosystem II (PSII). It binds chlorophyll and helps catalyze the primary light-induced photochemical processes of PSII. PSII is a light-driven water:plastoquinone oxidoreductase, using light energy to abstract electrons from H(2)O, generating O(2) and a proton gradient subsequently used for ATP formation. The polypeptide is Photosystem II CP47 reaction center protein (Zea mays (Maize)).